We begin with the raw amino-acid sequence, 149 residues long: D-aminoacyl-tRNA deacylase (149 aa).

The short motif at 137-138 (GP) is the Gly-cisPro motif, important for rejection of L-amino acids element.

Belongs to the DTD family. Homodimer.

The protein resides in the cytoplasm. It catalyses the reaction glycyl-tRNA(Ala) + H2O = tRNA(Ala) + glycine + H(+). The catalysed reaction is a D-aminoacyl-tRNA + H2O = a tRNA + a D-alpha-amino acid + H(+). An aminoacyl-tRNA editing enzyme that deacylates mischarged D-aminoacyl-tRNAs. Also deacylates mischarged glycyl-tRNA(Ala), protecting cells against glycine mischarging by AlaRS. Acts via tRNA-based rather than protein-based catalysis; rejects L-amino acids rather than detecting D-amino acids in the active site. By recycling D-aminoacyl-tRNA to D-amino acids and free tRNA molecules, this enzyme counteracts the toxicity associated with the formation of D-aminoacyl-tRNA entities in vivo and helps enforce protein L-homochirality. The polypeptide is D-aminoacyl-tRNA deacylase (Clostridium perfringens (strain ATCC 13124 / DSM 756 / JCM 1290 / NCIMB 6125 / NCTC 8237 / Type A)).